The sequence spans 1981 residues: Nonribosomal peptide synthetase rstn8 (1981 aa).

The tract at residues 251 to 638 (SYAALEQESA…ELGEIEYQAS (388 aa)) is adenylation. Positions 763–840 (HHAGQKYDEM…ELFHRSQKTP (78 aa)) constitute a Carrier 1 domain. Serine 800 is modified (O-(pantetheine 4'-phosphoryl)serine). The tract at residues 883-1293 (EDIYPCSPLQ…DASMGTILSQ (411 aa)) is condensation 1. One can recognise a Carrier 2 domain in the interval 1438–1514 (EPLLPLEATL…CLASTLNSRP (77 aa)). The residue at position 1475 (serine 1475) is an O-(pantetheine 4'-phosphoryl)serine. Residues 1586-1978 (EEQIDLVSFA…TFAQSIERII (393 aa)) are condensation 1. Residues 1754–1774 (HHHHQHEGRQHHGASETNGNR) are disordered.

The protein belongs to the NRP synthetase family. The cofactor is pantetheine 4'-phosphate.

It carries out the reaction 2 L-tryptophan = cyclo(L-Trp-L-Trp) + 2 H2O. It participates in alkaloid biosynthesis. In terms of biological role, nonribosomal peptide synthetase; part of the gene cluster that mediates the biosynthesis of okaramine B, a prenylated indole alkaloid that possesses an unusual octacyclic ring system, including a four-membered azetidine ring and an eight-membered azocine ring, and that exhibits insecticidal activity against silkworm larvae. Within the pathway, okaA acts as a bimodular non-ribosomal peptide synthetase (NRPS) that condenses two tryptophan molecules into cyclo(L-Trp-L-Trp). Prenylation by the prenyltransferase okaC then leads to the formation of cyclo(N8-(alpha,alpha-dimethylallyl)-L-Trp-6a-(alpha,alpha-dime-thylallyl)-L-Trp). This is followed by indole 2,3-epoxidation by the FAD-dependent monooxygenase okaB to facilitate the formation of the hexahydropyrrolo[2,3-b]indole (HPI) moiety of okaramine C. The cytochrome P450 monooxygenase okaD then likely catalyzes formation of the eight-membered ring of okaramine A. The dioxygenase okaE further forms the unusual 2-dimethyl-3-methyl-azetidine ring to yield 12-deshydroxyl okaramine E, as well as the hydroxylation of 12-deshydroxyl okaramine E to produce okaramine E. The cytochrome P450 monoxygenase okaG converts 12-deshydroxyl okaramine E into 3-desmethyl okaramine B which is further methylated by the methyltransferase okaF into okaramine B. In a shunt pathway, okaG and okaF together are also able to convert okaramine E into okaramine D. Okaramine H is produced by nonenzymatic conversion from okaramine A. The chain is Nonribosomal peptide synthetase rstn8 from Penicillium ochrochloron.